Here is a 463-residue protein sequence, read N- to C-terminus: Quinolone resistance protein NorB (463 aa).

The next 14 membrane-spanning stretches (helical) occupy residues 17–37, 53–73, 86–106, 107–127, 142–162, 165–185, 201–221, 230–250, 273–293, 299–319, 334–354, 357–377, 403–423, and 435–455; these read IGIVLSVITFWLFAQSLVNVV, IAVSITALFSGMFVVGAGGLA, IILNILGSLLIIISNIPLLLI, IGRLIQGLSAACIMPATLSII, YWSIGSWGGSGVCSFFGGAVA, LGWRWIFILSIIISLIALFLI, FDIKGLVLLVIMLLSLNILIT, SLLFITILAIAIVSFSLFIVL, TASNFLLNGVAGTLIVANTFV, YSSLQAGSLSITYLVMVLIMI, PMLIGTAVLIVGECLISLTFL, ILYVICCIIGYLFFGLGLGIY, MASALGGAFGVALSGAVYAIV, and IALWLNAGMGILSFVIILLLV.

This sequence belongs to the major facilitator superfamily. TCR/Tet family.

The protein resides in the cell membrane. Multidrug efflux pump that acts independently of NorA and is one of the factors that confers resistance against diverse quinolones and chemical compounds. The chain is Quinolone resistance protein NorB (norB) from Staphylococcus aureus (strain MRSA252).